A 546-amino-acid chain; its full sequence is (-)-5-epieremophilene synthase STPS3 (546 aa).

Mg(2+) contacts are provided by aspartate 299, aspartate 303, aspartate 442, threonine 446, and glutamate 450. Residues 299–303 (DDTYD) carry the DDXXD motif motif.

This sequence belongs to the terpene synthase family. Tpsa subfamily. In terms of assembly, monomer. Requires Mg(2+) as cofactor. In terms of tissue distribution, highly expressed in flowers and at lower levels in leaves.

The enzyme catalyses (2E,6E)-farnesyl diphosphate = (-)-5-epi-eremophilene + diphosphate. It functions in the pathway secondary metabolite biosynthesis; terpenoid biosynthesis. Sesquiterpene synthase that catalyzes the conversion of farnesyl diphosphate to (-)-5-epi-eremophilene. The protein is (-)-5-epieremophilene synthase STPS3 of Salvia miltiorrhiza (Chinese sage).